A 66-amino-acid polypeptide reads, in one-letter code: Light-harvesting protein B-800-850 alpha chain B (66 aa).

The Cytoplasmic segment spans residues 1 to 11 (MNQGRIWTVVN). The chain crosses the membrane as a helical span at residues 12–35 (PGVGLPLLLGSVTVIAILVHYAVL). Histidine 31 provides a ligand contact to a bacteriochlorophyll. The Periplasmic segment spans residues 36-66 (SNTTWFPKYWNGATVAAPAAAPAPAAPAAKK).

This sequence belongs to the antenna complex alpha subunit family. The core complex is formed by different alpha and beta chains, binding bacteriochlorophyll molecules, and arranged most probably in tetrameric structures disposed around the reaction center. The non-pigmented gamma chains may constitute additional components.

It localises to the cell inner membrane. Antenna complexes are light-harvesting systems, which transfer the excitation energy to the reaction centers. In Rhodopseudomonas palustris (strain ATCC BAA-98 / CGA009), this protein is Light-harvesting protein B-800-850 alpha chain B (pucAB).